A 145-amino-acid polypeptide reads, in one-letter code: Large-conductance mechanosensitive channel (145 aa).

A run of 2 helical transmembrane segments spans residues 14–34 (VIDL…VNSL) and 83–103 (GAFL…FLLV).

The protein belongs to the MscL family. As to quaternary structure, homopentamer.

It is found in the cell inner membrane. Functionally, channel that opens in response to stretch forces in the membrane lipid bilayer. May participate in the regulation of osmotic pressure changes within the cell. This is Large-conductance mechanosensitive channel from Paracoccus denitrificans (strain Pd 1222).